A 315-amino-acid chain; its full sequence is Transcription repressor OFP7 (315 aa).

The disordered stretch occupies residues 113 to 183 (YETPRRKIYN…ELPRVTRRPR (71 aa)). Over residues 130–145 (RRRLKKKEKSNSRRRG) the composition is skewed to basic residues. Residues 160 to 174 (LPSSTNLSPEYSSSE) are compositionally biased toward polar residues. Residues 230–289 (VVKKSEDPYEDFKGSMMEMIVEKKMFEVAELEQLLSCFLSLNAKRHHRAIVRAFSEIWVA) enclose the OVATE domain.

Expressed in roots, shoots, stems, flower buds and siliques.

It is found in the nucleus. In terms of biological role, transcriptional repressor that regulates multiple aspects of plant growth and development through the regulation of BEL1-LIKE (BLH) and KNOX TALE (KNAT) homeodomain transcription factors. The polypeptide is Transcription repressor OFP7 (OFP7) (Arabidopsis thaliana (Mouse-ear cress)).